The primary structure comprises 479 residues: Serine palmitoyltransferase 1 (479 aa).

Residues 1-16 (MFLFDIYNNILYYTKE) lie on the Lumenal side of the membrane. Residues 17-37 (FIVTSTSPNLFIHGLMAVFII) traverse the membrane as a helical segment. At 38–479 (YLLTKRPFKP…KCTSFVLESN (442 aa)) the chain is on the cytoplasmic side.

This sequence belongs to the class-II pyridoxal-phosphate-dependent aminotransferase family. In terms of assembly, forms a heterodimer with sptB. The cofactor is pyridoxal 5'-phosphate.

The protein resides in the endoplasmic reticulum membrane. It catalyses the reaction L-serine + hexadecanoyl-CoA + H(+) = 3-oxosphinganine + CO2 + CoA. Its pathway is lipid metabolism; sphingolipid metabolism. Component of serine palmitoyltransferase (SPT), which catalyzes the committed step in the synthesis of sphingolipids, the condensation of serine with palmitoyl CoA to form the long chain base 3-ketosphinganine. This Dictyostelium discoideum (Social amoeba) protein is Serine palmitoyltransferase 1 (sptA).